A 296-amino-acid chain; its full sequence is Elongation factor Ts (296 aa).

Residues 81–84 (TDFV) form an involved in Mg(2+) ion dislocation from EF-Tu region.

The protein belongs to the EF-Ts family.

It is found in the cytoplasm. In terms of biological role, associates with the EF-Tu.GDP complex and induces the exchange of GDP to GTP. It remains bound to the aminoacyl-tRNA.EF-Tu.GTP complex up to the GTP hydrolysis stage on the ribosome. This Ruthia magnifica subsp. Calyptogena magnifica protein is Elongation factor Ts.